Consider the following 638-residue polypeptide: Dihydrolipoyllysine-residue acetyltransferase component of pyruvate dehydrogenase complex (638 aa).

Lipoyl-binding domains lie at 2–74 (SEII…IELE) and 117–191 (SQEV…LTLR). The residue at position 40 (Lys40) is an N6-lipoyllysine. The span at 90–117 (PAAPTQAVDEAEAPSPGASATPAPAAAS) shows a compositional bias: low complexity. The segment at 90–119 (PAAPTQAVDEAEAPSPGASATPAPAAASQE) is disordered. At Lys157 the chain carries N6-lipoyllysine. The interval 201–220 (APAAAAAASPAPAPLAPAAA) is disordered. A Lipoyl-binding 3 domain is found at 222 to 296 (PQEVKVPDIG…GTGDQILTLR (75 aa)). Lys262 is subject to N6-lipoyllysine. Residues 301–320 (APSGPRARGSPGQAAAAPGA) are compositionally biased toward low complexity. The interval 301 to 336 (APSGPRARGSPGQAAAAPGAAPAPAPVGAPSRNGAK) is disordered. The Peripheral subunit-binding (PSBD) domain maps to 338–375 (HAGPAVRQLAREFGVELAAINSTGPRGRILKEDVQAYV). Residues 382-638 (AKEAPAAGAA…LLADIRAILL (257 aa)) are catalytic. Residue His611 is part of the active site.

Belongs to the 2-oxoacid dehydrogenase family. In terms of assembly, forms a 24-polypeptide structural core with octahedral symmetry. (R)-lipoate is required as a cofactor.

The catalysed reaction is N(6)-[(R)-dihydrolipoyl]-L-lysyl-[protein] + acetyl-CoA = N(6)-[(R)-S(8)-acetyldihydrolipoyl]-L-lysyl-[protein] + CoA. In terms of biological role, the pyruvate dehydrogenase complex catalyzes the overall conversion of pyruvate to acetyl-CoA and CO(2). It contains multiple copies of three enzymatic components: pyruvate dehydrogenase (E1), dihydrolipoamide acetyltransferase (E2) and lipoamide dehydrogenase (E3). The chain is Dihydrolipoyllysine-residue acetyltransferase component of pyruvate dehydrogenase complex from Azotobacter vinelandii.